The following is a 456-amino-acid chain: Taurine--pyruvate aminotransferase (456 aa).

The residue at position 280 (Lys-280) is an N6-(pyridoxal phosphate)lysine.

It belongs to the class-III pyridoxal-phosphate-dependent aminotransferase family. Homotetramer. Pyridoxal 5'-phosphate serves as cofactor.

The catalysed reaction is taurine + pyruvate = sulfoacetaldehyde + L-alanine. Its pathway is organosulfur degradation; alkanesulfonate degradation. In terms of biological role, involved in an anaerobic respiration pathway that converts the sulfonate taurine (2-aminoethanesulfonate) to ammonia, acetate and sulfide. Catalyzes the initial metabolic reaction of anaerobic taurine degradation, i.e. the transamination reaction between taurine and pyruvate leading to sulfoacetaldehyde and alanine. The sequence is that of Taurine--pyruvate aminotransferase from Bilophila wadsworthia (strain 3_1_6).